A 223-amino-acid chain; its full sequence is DNA mismatch repair protein MutH (223 aa).

The protein belongs to the MutH family.

It localises to the cytoplasm. In terms of biological role, sequence-specific endonuclease that cleaves unmethylated GATC sequences. It is involved in DNA mismatch repair. The chain is DNA mismatch repair protein MutH from Shewanella baltica (strain OS195).